Consider the following 327-residue polypeptide: tRNA-modifying protein YgfZ (327 aa).

The folate site is built by Trp27 and Trp189.

The protein belongs to the tRNA-modifying YgfZ family.

Its subcellular location is the cytoplasm. Folate-binding protein involved in regulating the level of ATP-DnaA and in the modification of some tRNAs. It is probably a key factor in regulatory networks that act via tRNA modification, such as initiation of chromosomal replication. The chain is tRNA-modifying protein YgfZ from Klebsiella pneumoniae (strain 342).